Here is a 297-residue protein sequence, read N- to C-terminus: Formamidopyrimidine-DNA glycosylase (297 aa).

The Schiff-base intermediate with DNA role is filled by P2. E3 (proton donor) is an active-site residue. The active-site Proton donor; for beta-elimination activity is K61. The DNA site is built by R120 and R176. The FPG-type zinc finger occupies H262 to R296. Catalysis depends on R286, which acts as the Proton donor; for delta-elimination activity.

The protein belongs to the FPG family. In terms of assembly, monomer. Requires Zn(2+) as cofactor.

It carries out the reaction Hydrolysis of DNA containing ring-opened 7-methylguanine residues, releasing 2,6-diamino-4-hydroxy-5-(N-methyl)formamidopyrimidine.. It catalyses the reaction 2'-deoxyribonucleotide-(2'-deoxyribose 5'-phosphate)-2'-deoxyribonucleotide-DNA = a 3'-end 2'-deoxyribonucleotide-(2,3-dehydro-2,3-deoxyribose 5'-phosphate)-DNA + a 5'-end 5'-phospho-2'-deoxyribonucleoside-DNA + H(+). In terms of biological role, involved in base excision repair of DNA damaged by oxidation or by mutagenic agents. Acts as a DNA glycosylase that recognizes and removes damaged bases. Has a preference for oxidized purines, such as 7,8-dihydro-8-oxoguanine (8-oxoG). Has AP (apurinic/apyrimidinic) lyase activity and introduces nicks in the DNA strand. Cleaves the DNA backbone by beta-delta elimination to generate a single-strand break at the site of the removed base with both 3'- and 5'-phosphates. The chain is Formamidopyrimidine-DNA glycosylase from Leifsonia xyli subsp. xyli (strain CTCB07).